The following is an 81-amino-acid chain: MNPLISAASVIAAGLAVGLASIGPGVGQGTAAGQAVEGIARQPEAEGKIRGTLLLSLAFMEALSIYGLVVALALLFANPFV.

2 helical membrane-spanning segments follow: residues Pro-3–Gly-23 and Leu-57–Ala-77.

The protein belongs to the ATPase C chain family. In terms of assembly, F-type ATPases have 2 components, F(1) - the catalytic core - and F(0) - the membrane proton channel. F(1) has five subunits: alpha(3), beta(3), gamma(1), delta(1), epsilon(1). F(0) has four main subunits: a(1), b(1), b'(1) and c(10-14). The alpha and beta chains form an alternating ring which encloses part of the gamma chain. F(1) is attached to F(0) by a central stalk formed by the gamma and epsilon chains, while a peripheral stalk is formed by the delta, b and b' chains.

It is found in the plastid. Its subcellular location is the chloroplast thylakoid membrane. F(1)F(0) ATP synthase produces ATP from ADP in the presence of a proton or sodium gradient. F-type ATPases consist of two structural domains, F(1) containing the extramembraneous catalytic core and F(0) containing the membrane proton channel, linked together by a central stalk and a peripheral stalk. During catalysis, ATP synthesis in the catalytic domain of F(1) is coupled via a rotary mechanism of the central stalk subunits to proton translocation. In terms of biological role, key component of the F(0) channel; it plays a direct role in translocation across the membrane. A homomeric c-ring of between 10-14 subunits forms the central stalk rotor element with the F(1) delta and epsilon subunits. This Gossypium barbadense (Sea Island cotton) protein is ATP synthase subunit c, chloroplastic.